The chain runs to 173 residues: RNA pyrophosphohydrolase (173 aa).

The Nudix hydrolase domain occupies 11–164; the sequence is PYRRSVGILV…KKHVYMKIVN (154 aa). The Nudix box motif lies at 52–73; sequence GGIDENEEPLDAARRELYEETG.

Belongs to the Nudix hydrolase family. RppH subfamily. Requires a divalent metal cation as cofactor.

In terms of biological role, accelerates the degradation of transcripts by removing pyrophosphate from the 5'-end of triphosphorylated RNA, leading to a more labile monophosphorylated state that can stimulate subsequent ribonuclease cleavage. This is RNA pyrophosphohydrolase from Bartonella henselae (strain ATCC 49882 / DSM 28221 / CCUG 30454 / Houston 1) (Rochalimaea henselae).